A 226-amino-acid chain; its full sequence is Ribonuclease 3 (226 aa).

The RNase III domain occupies 5–127 (LERLQRALGY…IIGAIYLDAG (123 aa)). Residue E40 participates in Mg(2+) binding. D44 is an active-site residue. Mg(2+)-binding residues include D113 and E116. Residue E116 is part of the active site. The 71-residue stretch at 154–224 (DSKTRLQEYL…AKQALLALGV (71 aa)) folds into the DRBM domain.

This sequence belongs to the ribonuclease III family. In terms of assembly, homodimer. Requires Mg(2+) as cofactor.

Its subcellular location is the cytoplasm. It carries out the reaction Endonucleolytic cleavage to 5'-phosphomonoester.. Its function is as follows. Digests double-stranded RNA. Involved in the processing of primary rRNA transcript to yield the immediate precursors to the large and small rRNAs (23S and 16S). Processes some mRNAs, and tRNAs when they are encoded in the rRNA operon. Processes pre-crRNA and tracrRNA of type II CRISPR loci if present in the organism. The chain is Ribonuclease 3 from Hahella chejuensis (strain KCTC 2396).